Here is a 332-residue protein sequence, read N- to C-terminus: L-lactate dehydrogenase A chain (332 aa).

NAD(+) is bound by residues 29 to 57 and Arg-99; that span reads GAVG…MEDK. Substrate is bound by residues Arg-106, Asn-138, and Arg-169. Asn-138 contacts NAD(+). His-193 functions as the Proton acceptor in the catalytic mechanism. Thr-248 contacts substrate.

This sequence belongs to the LDH/MDH superfamily. LDH family. In terms of assembly, homotetramer.

The protein localises to the cytoplasm. It catalyses the reaction (S)-lactate + NAD(+) = pyruvate + NADH + H(+). It participates in fermentation; pyruvate fermentation to lactate; (S)-lactate from pyruvate: step 1/1. Its function is as follows. Interconverts simultaneously and stereospecifically pyruvate and lactate with concomitant interconversion of NADH and NAD(+). The sequence is that of L-lactate dehydrogenase A chain (LDHA) from Sceloporus undulatus (Eastern fence lizard).